Consider the following 86-residue polypeptide: Photosystem I reaction center subunit PsaK 1 (86 aa).

Positions 1–8 (MLTSTLLA) are excised as a propeptide. The next 2 membrane-spanning stretches (helical) occupy residues 14–34 (LEWSPTVGIIMVIANVIAITF) and 60–80 (PALLATTAFGHILGVGLVLGL).

This sequence belongs to the PsaG/PsaK family. In terms of assembly, the cyanobacterial PSI reaction center is composed of one copy each of PsaA,B,C,D,E,F,I,J,K,L,M and X, and forms dimeric and tetrameric complexes.

Its subcellular location is the cellular thylakoid membrane. This chain is Photosystem I reaction center subunit PsaK 1 (psaK1), found in Nostoc sp. (strain PCC 7120 / SAG 25.82 / UTEX 2576).